Consider the following 423-residue polypeptide: Glutamate-1-semialdehyde 2,1-aminomutase (423 aa).

N6-(pyridoxal phosphate)lysine is present on lysine 259.

The protein belongs to the class-III pyridoxal-phosphate-dependent aminotransferase family. HemL subfamily. In terms of assembly, homodimer. The cofactor is pyridoxal 5'-phosphate.

The protein resides in the cytoplasm. The catalysed reaction is (S)-4-amino-5-oxopentanoate = 5-aminolevulinate. The protein operates within porphyrin-containing compound metabolism; protoporphyrin-IX biosynthesis; 5-aminolevulinate from L-glutamyl-tRNA(Glu): step 2/2. This Thermosipho africanus (strain TCF52B) protein is Glutamate-1-semialdehyde 2,1-aminomutase.